We begin with the raw amino-acid sequence, 214 residues long: Somatotropin-A (214 aa).

Residues M1–A25 form the signal peptide. 2 cysteine pairs are disulfide-bonded: C77/C187 and C204/C212.

Belongs to the somatotropin/prolactin family.

The protein resides in the secreted. Growth hormone plays an important role in growth control. The sequence is that of Somatotropin-A (gh-a) from Xenopus laevis (African clawed frog).